A 125-amino-acid chain; its full sequence is Histone H2A (125 aa).

Positions 1–18 (MSGRGKGGKAKGKSKSRS) are enriched in basic residues. A disordered region spans residues 1–23 (MSGRGKGGKAKGKSKSRSSRAGL). Ser2 carries the N-acetylserine modification. Ser2 bears the Phosphoserine mark. The residue at position 104 (Gln104) is an N5-methylglutamine.

This sequence belongs to the histone H2A family. The nucleosome is a histone octamer containing two molecules each of H2A, H2B, H3 and H4 assembled in one H3-H4 heterotetramer and two H2A-H2B heterodimers. The octamer wraps approximately 147 bp of DNA.

The protein resides in the nucleus. The protein localises to the chromosome. Functionally, core component of nucleosome. Nucleosomes wrap and compact DNA into chromatin, limiting DNA accessibility to the cellular machineries which require DNA as a template. Histones thereby play a central role in transcription regulation, DNA repair, DNA replication and chromosomal stability. DNA accessibility is regulated via a complex set of post-translational modifications of histones, also called histone code, and nucleosome remodeling. The chain is Histone H2A from Urechis caupo (Innkeeper worm).